The sequence spans 298 residues: Elongation factor Ts (298 aa).

An involved in Mg(2+) ion dislocation from EF-Tu region spans residues 79 to 82; it reads TDFV.

This sequence belongs to the EF-Ts family.

It is found in the cytoplasm. Functionally, associates with the EF-Tu.GDP complex and induces the exchange of GDP to GTP. It remains bound to the aminoacyl-tRNA.EF-Tu.GTP complex up to the GTP hydrolysis stage on the ribosome. The chain is Elongation factor Ts (tsf) from Mycoplasma genitalium (strain ATCC 33530 / DSM 19775 / NCTC 10195 / G37) (Mycoplasmoides genitalium).